Here is a 137-residue protein sequence, read N- to C-terminus: Small ribosomal subunit protein uS12 (137 aa).

Disordered regions lie at residues 1–21 (MPTI…KSDS) and 34–57 (VHTK…TPKK).

The protein belongs to the universal ribosomal protein uS12 family. Part of the 30S ribosomal subunit. Contacts proteins S8 and S17. May interact with IF1 in the 30S initiation complex.

Its function is as follows. With S4 and S5 plays an important role in translational accuracy. Interacts with and stabilizes bases of the 16S rRNA that are involved in tRNA selection in the A site and with the mRNA backbone. Located at the interface of the 30S and 50S subunits, it traverses the body of the 30S subunit contacting proteins on the other side and probably holding the rRNA structure together. The combined cluster of proteins S8, S12 and S17 appears to hold together the shoulder and platform of the 30S subunit. This Streptococcus mutans serotype c (strain ATCC 700610 / UA159) protein is Small ribosomal subunit protein uS12.